A 214-amino-acid polypeptide reads, in one-letter code: dITP/XTP pyrophosphatase (214 aa).

13-18 (SHNAGK) is a substrate binding site. Residues D45 and D74 each coordinate Mg(2+). D74 acts as the Proton acceptor in catalysis. Residues S75, 163–166 (FGYD), K186, and 199–200 (HR) contribute to the substrate site.

The protein belongs to the HAM1 NTPase family. Homodimer. Requires Mg(2+) as cofactor.

The enzyme catalyses XTP + H2O = XMP + diphosphate + H(+). It catalyses the reaction dITP + H2O = dIMP + diphosphate + H(+). It carries out the reaction ITP + H2O = IMP + diphosphate + H(+). In terms of biological role, pyrophosphatase that catalyzes the hydrolysis of nucleoside triphosphates to their monophosphate derivatives, with a high preference for the non-canonical purine nucleotides XTP (xanthosine triphosphate), dITP (deoxyinosine triphosphate) and ITP. Seems to function as a house-cleaning enzyme that removes non-canonical purine nucleotides from the nucleotide pool, thus preventing their incorporation into DNA/RNA and avoiding chromosomal lesions. The protein is dITP/XTP pyrophosphatase of Rhizobium meliloti (strain 1021) (Ensifer meliloti).